A 179-amino-acid chain; its full sequence is Large ribosomal subunit protein uL5 (179 aa).

This sequence belongs to the universal ribosomal protein uL5 family. In terms of assembly, part of the 50S ribosomal subunit; part of the 5S rRNA/L5/L18/L25 subcomplex. Contacts the 5S rRNA and the P site tRNA. Forms a bridge to the 30S subunit in the 70S ribosome.

Its function is as follows. This is one of the proteins that bind and probably mediate the attachment of the 5S RNA into the large ribosomal subunit, where it forms part of the central protuberance. In the 70S ribosome it contacts protein S13 of the 30S subunit (bridge B1b), connecting the 2 subunits; this bridge is implicated in subunit movement. Contacts the P site tRNA; the 5S rRNA and some of its associated proteins might help stabilize positioning of ribosome-bound tRNAs. This chain is Large ribosomal subunit protein uL5, found in Synechococcus sp. (strain CC9311).